Consider the following 320-residue polypeptide: Cytochrome f (320 aa).

Residues 1–35 (MQTRKTFSWIKEQIARSISVSLLIYIITRTSISSA) form the signal peptide. Heme contacts are provided by tyrosine 36, cysteine 56, cysteine 59, and histidine 60. The helical transmembrane segment at 286–306 (VQGLLFFLASVILAQIFLVLK) threads the bilayer.

This sequence belongs to the cytochrome f family. The 4 large subunits of the cytochrome b6-f complex are cytochrome b6, subunit IV (17 kDa polypeptide, petD), cytochrome f and the Rieske protein, while the 4 small subunits are PetG, PetL, PetM and PetN. The complex functions as a dimer. The cofactor is heme.

The protein resides in the plastid. It localises to the chloroplast thylakoid membrane. In terms of biological role, component of the cytochrome b6-f complex, which mediates electron transfer between photosystem II (PSII) and photosystem I (PSI), cyclic electron flow around PSI, and state transitions. This Jasminum nudiflorum (Winter jasmine) protein is Cytochrome f.